The following is a 115-amino-acid chain: NADH-ubiquinone oxidoreductase chain 3 (115 aa).

A run of 3 helical transmembrane segments spans residues 3-23 (LMLTLLTNTLLASLLVLIAFW), 55-75 (FFLVAITFLLFDLEIALLLPL), and 84-104 (LNTMLIMALILISLLAISLAY).

This sequence belongs to the complex I subunit 3 family. Core subunit of respiratory chain NADH dehydrogenase (Complex I) which is composed of 45 different subunits. Interacts with TMEM186. Interacts with TMEM242.

It localises to the mitochondrion inner membrane. It catalyses the reaction a ubiquinone + NADH + 5 H(+)(in) = a ubiquinol + NAD(+) + 4 H(+)(out). Functionally, core subunit of the mitochondrial membrane respiratory chain NADH dehydrogenase (Complex I) which catalyzes electron transfer from NADH through the respiratory chain, using ubiquinone as an electron acceptor. Essential for the catalytic activity of complex I. The protein is NADH-ubiquinone oxidoreductase chain 3 of Equus asinus (Donkey).